The chain runs to 962 residues: Glycine dehydrogenase (decarboxylating) (962 aa).

An N6-(pyridoxal phosphate)lysine modification is found at K709.

It belongs to the GcvP family. In terms of assembly, the glycine cleavage system is composed of four proteins: P, T, L and H. Pyridoxal 5'-phosphate serves as cofactor.

The enzyme catalyses N(6)-[(R)-lipoyl]-L-lysyl-[glycine-cleavage complex H protein] + glycine + H(+) = N(6)-[(R)-S(8)-aminomethyldihydrolipoyl]-L-lysyl-[glycine-cleavage complex H protein] + CO2. The glycine cleavage system catalyzes the degradation of glycine. The P protein binds the alpha-amino group of glycine through its pyridoxal phosphate cofactor; CO(2) is released and the remaining methylamine moiety is then transferred to the lipoamide cofactor of the H protein. The chain is Glycine dehydrogenase (decarboxylating) from Shewanella baltica (strain OS155 / ATCC BAA-1091).